Here is a 233-residue protein sequence, read N- to C-terminus: Large ribosomal subunit protein uL1 (233 aa).

It belongs to the universal ribosomal protein uL1 family. Part of the 50S ribosomal subunit.

Its function is as follows. Binds directly to 23S rRNA. The L1 stalk is quite mobile in the ribosome, and is involved in E site tRNA release. In terms of biological role, protein L1 is also a translational repressor protein, it controls the translation of the L11 operon by binding to its mRNA. In Thermotoga maritima (strain ATCC 43589 / DSM 3109 / JCM 10099 / NBRC 100826 / MSB8), this protein is Large ribosomal subunit protein uL1.